The following is a 144-amino-acid chain: Transcriptional regulator SlyA (144 aa).

In terms of domain architecture, HTH marR-type spans 2–135; sequence ESPLGSDLAR…LIKLIAKLEH (134 aa). A DNA-binding region (H-T-H motif) is located at residues 49-72; the sequence is QIQLAKAIGIEQPSLVRTLDQLED.

It belongs to the SlyA family. As to quaternary structure, homodimer.

The protein localises to the cytoplasm. In terms of biological role, transcription regulator that can specifically activate or repress expression of target genes. Required for virulence and survival in the macrophage environment. Probably activates the transcription of ssrB. Independently of ssrB activation, capable of stimulating the expression of virulence genes found on pathogenicity island 2 (SPI2). Probably activates expression of ispA, xseB genes, and of omp operon. The chain is Transcriptional regulator SlyA from Salmonella typhimurium (strain LT2 / SGSC1412 / ATCC 700720).